The sequence spans 257 residues: Zinc transporter ZupT (257 aa).

3 helical membrane passes run 5 to 25 (LILT…GVLG), 32 to 52 (LLAF…LMEM), and 61 to 81 (GMSP…YFGL). Asn-120 and Glu-123 together coordinate Fe(2+). Positions 123 and 148 each coordinate Zn(2+). The next 4 helical transmembrane spans lie at 137-157 (LGFG…LAVA), 171-191 (ILWA…AWLI), 195-215 (MISP…MVAL), and 236-256 (GVLC…TAGI). Residues Asn-149, Glu-152, and Glu-181 each contribute to the Fe(2+) site. Residue Glu-152 participates in Zn(2+) binding.

The protein belongs to the ZIP transporter (TC 2.A.5) family. ZupT subfamily.

The protein localises to the cell inner membrane. It carries out the reaction Zn(2+)(in) = Zn(2+)(out). In terms of biological role, mediates zinc uptake. May also transport other divalent cations. The polypeptide is Zinc transporter ZupT (Escherichia coli O45:K1 (strain S88 / ExPEC)).